We begin with the raw amino-acid sequence, 215 residues long: Probable phosphoglycerate mutase GpmB (215 aa).

Residues 8–15 (RHGETQWN), 21–22 (QG), R58, R60, 82–85 (ELNM), 104–105 (RR), and 151–152 (GI) each bind substrate. The active-site Tele-phosphohistidine intermediate is the H9. The active-site Proton donor/acceptor is E82.

This sequence belongs to the phosphoglycerate mutase family. GpmB subfamily.

The enzyme catalyses (2R)-2-phosphoglycerate = (2R)-3-phosphoglycerate. Its pathway is carbohydrate degradation; glycolysis; pyruvate from D-glyceraldehyde 3-phosphate: step 3/5. The polypeptide is Probable phosphoglycerate mutase GpmB (Shigella boydii serotype 18 (strain CDC 3083-94 / BS512)).